A 339-amino-acid polypeptide reads, in one-letter code: Annexin A2 (339 aa).

At S2 the chain carries N-acetylserine. An S100A10-binding site region spans residues 2 to 24; that stretch reads STVHEILSKLSLEGDHSLPPSAY. Y24 is modified (phosphotyrosine; by SRC). Residue T26 is modified to Phosphothreonine; by PKC. Annexin repeat units follow at residues 33-104, 105-176, 189-261, and 265-336; these read FDAD…GLLK, TPSQ…ALAK, ELID…NLVQ, and NKQL…NLCG.

The protein belongs to the annexin family. As to quaternary structure, heterotetramer containing 2 light chains of S100A10/p11 and 2 heavy chains of ANXA2/p36.

It is found in the secreted. Its subcellular location is the extracellular space. The protein localises to the extracellular matrix. The protein resides in the basement membrane. Its function is as follows. Calcium-regulated membrane-binding protein whose affinity for calcium is greatly enhanced by anionic phospholipids. It binds two calcium ions with high affinity. The protein is Annexin A2 (ANXA2) of Gallus gallus (Chicken).